We begin with the raw amino-acid sequence, 328 residues long: Diacetylchitobiose uptake system permease protein DasB (328 aa).

Residues 1–27 form a disordered region; that stretch reads MTVQTERPPSGPSDVRKADGGGTGGTR. Helical transmembrane passes span 36–56, 104–124, 134–154, 188–208, 247–267, and 297–317; these read ALAP…LLGW, IIFT…IGLL, FVLM…ATTV, FSTF…FVAI, FLYA…VQVY, and MGAA…AYYL. One can recognise an ABC transmembrane type-1 domain in the interval 100–316; sequence TVRSIIFTAV…LILLGLTAYY (217 aa).

Belongs to the binding-protein-dependent transport system permease family. The complex is composed of two ATP-binding proteins (MsiK), two transmembrane proteins (DasB and DasC) and a solute-binding protein (DasA).

The protein resides in the cell membrane. Part of the ABC transporter complex DasABC-MsiK involved in N,N'-diacetylchitobiose ((GlcNAc)2) uptake. Responsible for the translocation of the substrate across the membrane. The chain is Diacetylchitobiose uptake system permease protein DasB from Streptomyces coelicolor (strain ATCC BAA-471 / A3(2) / M145).